The chain runs to 445 residues: MKMKAKWLPIAAGVTAALASQAAFAVDFHGYFRSGVGVSTDGSMQTGLSDNAKQKVGRLGNEADTYGEIQLGSEVFNKDGKTFYVDSMVAMTSNGSNDWESTESKFQCTSANGTALDGCENKEDATFALRQFNVQAKGLLGFAPEATLWAGKRYYQRHDVHISDFYYWNISGRGAGIEGIQAGPGKVSFAWVRNDRSGTNVDGTYNDEMNVNTLDLRYAGIPLWQDGSLEVGVDYAIANPSDAQKDSANAQYKNAKDGVMLTAELTQGILGGFNKTVLQYGTEGYSKTFAFWGDRSWYGAEAKDGADGFRIINHGVIPMGNSWEMGHQLVYGVGNDMWDTNDKWETMSVVARPMYKWDDFNKTIFEGGYFKDKNKSTNGTSEEDAGYKLTLAQAWSAGSSFWARPEIRVFASYLAQDKKEMKGNAFNNGTADDTWNFGVQAEAWW.

The N-terminal stretch at 1 to 25 (MKMKAKWLPIAAGVTAALASQAAFA) is a signal peptide.

This sequence belongs to the porin LamB (TC 1.B.3) family. Homotrimer formed of three 18-stranded antiparallel beta-barrels, containing three independent channels.

The protein localises to the cell outer membrane. The enzyme catalyses beta-maltose(in) = beta-maltose(out). In terms of biological role, involved in the transport of maltose and maltodextrins. This is Maltoporin from Aeromonas salmonicida.